The chain runs to 247 residues: Mast cell protease 8 (247 aa).

The signal sequence occupies residues 1–19 (MFLLLVLLVAALPVNAEGG). A propeptide (activation peptide) is located at residue Glu20. Positions 21–242 (IIWGTESKPH…FMPWIRKTMK (222 aa)) constitute a Peptidase S1 domain. Asn41 is a glycosylation site (N-linked (GlcNAc...) asparagine). Cys49 and Cys65 form a disulfide bridge. His64 acts as the Charge relay system in catalysis. N-linked (GlcNAc...) asparagine glycans are attached at residues Asn71 and Asn101. Asp107 acts as the Charge relay system in catalysis. Cystine bridges form between Cys141/Cys206 and Cys171/Cys185. 2 N-linked (GlcNAc...) asparagine glycosylation sites follow: Asn151 and Asn179. Ser200 (charge relay system) is an active-site residue.

Belongs to the peptidase S1 family. Granzyme subfamily.

Its subcellular location is the secreted. The protein resides in the cytoplasmic granule. In Mus musculus (Mouse), this protein is Mast cell protease 8 (Mcpt8).